The chain runs to 558 residues: Phosphatidylserine lipase ABHD16A (558 aa).

2 helical membrane passes run 60 to 80 (ILALASVFWSISYYSSPFAFF) and 93 to 113 (VVPFSHYAGTLLLLLAGVACL). Over 114–558 (RGIGRWTNPQ…AQNFQMPWHL (445 aa)) the chain is Cytoplasmic. Residues 281–407 (LVICCEGNAG…LVTRTVRQHL (127 aa)) form the AB hydrolase-1 domain. Residues serine 355, aspartate 430, and histidine 507 each act as charge relay system in the active site.

This sequence belongs to the AB hydrolase superfamily. ABHD16 family.

It is found in the membrane. The enzyme catalyses 1-heptadecanoyl-2-(5Z,8Z,11Z,14Z-eicosatetraenoyl)-sn-glycero-3-phosphoserine + H2O = 1-heptadecanoyl-sn-glycero-3-phosphoserine + (5Z,8Z,11Z,14Z)-eicosatetraenoate + H(+). It catalyses the reaction 1-hexadecanoyl-2-(9Z-octadecenoyl)-sn-glycero-3-phospho-L-serine + H2O = 1-hexadecanoyl-sn-glycero-3-phospho-L-serine + (9Z)-octadecenoate + H(+). The catalysed reaction is 1-octadecanoyl-2-(9Z,12Z-octadecadienoyl)-sn-glycero-3-phosphoserine + H2O = 1-octadecanoyl-sn-glycero-3-phosphoserine + (9Z,12Z)-octadecadienoate + H(+). It carries out the reaction 1-heptadecanoyl-2-(5Z,8Z,11Z,14Z-eicosatetraenoyl)-sn-glycero-3-phosphocholine + H2O = 1-heptadecanoyl-sn-glycero-3-phosphocholine + (5Z,8Z,11Z,14Z)-eicosatetraenoate + H(+). The enzyme catalyses 1-hexadecanoyl-2-(9Z-octadecenoyl)-sn-glycero-3-phosphoglycerol + H2O = 1-hexadecanoyl-sn-glycero-3-phosphoglycerol + (9Z)-octadecenoate + H(+). It catalyses the reaction 1-hexadecanoyl-2-(9Z-octadecenoyl)-sn-glycero-3-phospho-(1D-myo-inositol) + H2O = 1-hexadecanoyl-sn-glycero-3-phospho-(1D-myo-inositol) + (9Z)-octadecenoate + H(+). The catalysed reaction is 1-heptadecanoyl-2-(5Z,8Z,11Z,14Z-eicosatetraenoyl)-sn-glycero-3-phosphoethanolamine + H2O = 1-heptadecanoyl-sn-glycero-3-phosphoethanolamine + (5Z,8Z,11Z,14Z)-eicosatetraenoate + H(+). It carries out the reaction 1-hexadecanoyl-2-(9Z-octadecenoyl)-sn-glycero-3-phospho-(1'-sn-glycerol) + H2O = 1-hexadecanoyl-sn-glycero-3-phospho-(1'-sn-glycerol) + (9Z)-octadecenoate + H(+). The enzyme catalyses Hydrolyzes glycerol monoesters of long-chain fatty acids.. It catalyses the reaction 1-tetradecanoylglycerol + H2O = tetradecanoate + glycerol + H(+). The catalysed reaction is 2-hexadecanoylglycerol + H2O = glycerol + hexadecanoate + H(+). It carries out the reaction 1-(9Z-octadecenoyl)-glycerol + H2O = glycerol + (9Z)-octadecenoate + H(+). The enzyme catalyses 2-(9Z-octadecenoyl)-glycerol + H2O = glycerol + (9Z)-octadecenoate + H(+). It catalyses the reaction 2-(9Z,12Z-octadecadienoyl)-glycerol + H2O = (9Z,12Z)-octadecadienoate + glycerol + H(+). The catalysed reaction is 1-(5Z,8Z,11Z,14Z-eicosatetraenoyl)-glycerol + H2O = glycerol + (5Z,8Z,11Z,14Z)-eicosatetraenoate + H(+). It carries out the reaction 2-(5Z,8Z,11Z,14Z-eicosatetraenoyl)-glycerol + H2O = glycerol + (5Z,8Z,11Z,14Z)-eicosatetraenoate + H(+). The enzyme catalyses prostaglandin D2-1-glycerol ester + H2O = prostaglandin D2 + glycerol + H(+). It catalyses the reaction 2-glyceryl-15-deoxy-Delta(12,14)-prostaglandin J2 + H2O = 15-deoxy-Delta(12,14)-prostaglandin J2 + glycerol + H(+). The catalysed reaction is 1-(9Z,12Z-octadecadienoyl)-glycerol + H2O = (9Z,12Z)-octadecadienoate + glycerol + H(+). Its function is as follows. Phosphatidylserine (PS) lipase that mediates the hydrolysis of phosphatidylserine to generate lysophosphatidylserine (LPS). LPS constitutes a class of signaling lipids that regulates immunological and neurological processes. Has no activity towards diacylglycerol, triacylglycerol or lysophosphatidylserine lipase. Also has monoacylglycerol lipase activity, with preference for 1-(9Z,12Z-octadecadienoyl)-glycerol (1-LG) and 2-glyceryl-15-deoxy-Delta(12,14)-prostaglandin J2 (15d-PGJ(2)-G). This chain is Phosphatidylserine lipase ABHD16A, found in Bos taurus (Bovine).